Consider the following 358-residue polypeptide: Mitogen-activated protein kinase 1 (358 aa).

A2 carries the post-translational modification N-acetylalanine. The 289-residue stretch at Y23–L311 folds into the Protein kinase domain. S27 bears the Phosphoserine; by SGK1 mark. Residues I29–V37 and K52 contribute to the ATP site. D147 serves as the catalytic Proton acceptor. T183 carries the post-translational modification Phosphothreonine; by MAP2K1 and MAP2K2. Positions T183 to Y185 match the TXY motif. Y185 carries the phosphotyrosine; by MAP2K1 and MAP2K2 modification. T188 is subject to Phosphothreonine; by autocatalysis. Phosphoserine occurs at positions 244, 246, and 282.

The protein belongs to the protein kinase superfamily. CMGC Ser/Thr protein kinase family. MAP kinase subfamily. As to quaternary structure, binds both upstream activators and downstream substrates in multimolecular complexes. This interaction inhibits its tyrosine-kinase activity. Interacts with ADAM15, ARHGEF2, ARRB2, DAPK1 (via death domain), HSF4, IER3, IPO7, NISCH, SGK1, and isoform 1 of NEK2. Interacts (via phosphorylated form) with TPR (via C-terminal region and phosphorylated form); the interaction requires dimerization of MAPK1/ERK2 and increases following EGF stimulation. Interacts with MAP2K1. Interacts with DUSP6. Interacts (phosphorylated form) with CAV2 ('Tyr-19'-phosphorylated form); the interaction, promoted by insulin, leads to nuclear location and MAPK1 activation. Interacts with DCC. Interacts with MORG1. Interacts with PEA15. Interacts with MKNK2. MKNK2 isoform 1 binding prevents from dephosphorylation and inactivation. The phosphorylated form interacts with PML. Interacts with STYX. Interacts with CDK2AP2. Interacts with CAVIN4. Interacts with DUSP7; the interaction enhances DUSP7 phosphatase activity. Interacts with GIT1; this interaction is necessary for MAPK1 localization to focal adhesions. Interacts with ZNF263. Interacts with phosphoglycerate kinase PGK1; the interaction is direct, occurs under hypoxic conditions, and promotes interaction between PGK1 and PIN1. The cofactor is Mg(2+). Post-translationally, dually phosphorylated on Thr-183 and Tyr-185, which activates the enzyme. Ligand-activated ALK induces tyrosine phosphorylation. Dephosphorylated by PTPRJ at Tyr-185. Phosphorylated upon FLT3 and KIT signaling. Dephosphorylated by DUSP1 and DUSP2 at Thr-183 and Tyr-185. In terms of processing, ISGylated. Ubiquitinated by TRIM15 via 'Lys-63'-linked ubiquitination; leading to activation. Deubiquitinated by CYLD. In terms of tissue distribution, widely expressed.

The protein localises to the cytoplasm. The protein resides in the cytoskeleton. Its subcellular location is the spindle. It localises to the nucleus. It is found in the microtubule organizing center. The protein localises to the centrosome. The protein resides in the membrane. Its subcellular location is the caveola. It localises to the cell junction. It is found in the focal adhesion. The enzyme catalyses L-seryl-[protein] + ATP = O-phospho-L-seryl-[protein] + ADP + H(+). It carries out the reaction L-threonyl-[protein] + ATP = O-phospho-L-threonyl-[protein] + ADP + H(+). Its activity is regulated as follows. Phosphorylated by MAP2K1/MEK1 and MAP2K2/MEK2 on Thr-183 and Tyr-185 in response to external stimuli like insulin or NGF. Both phosphorylations are required for activity. This phosphorylation causes dramatic conformational changes, which enable full activation and interaction of MAPK1/ERK2 with its substrates. Phosphorylation on Ser-27 by SGK1 results in its activation by enhancing its interaction with MAP2K1/MEK1 and MAP2K2/MEK2. Dephosphorylated and inactivated by DUSP1, DUSP3, DUSP6 and DUSP9. Inactivated by pyrimidylpyrrole inhibitors. Serine/threonine kinase which acts as an essential component of the MAP kinase signal transduction pathway. MAPK1/ERK2 and MAPK3/ERK1 are the 2 MAPKs which play an important role in the MAPK/ERK cascade. They participate also in a signaling cascade initiated by activated KIT and KITLG/SCF. Depending on the cellular context, the MAPK/ERK cascade mediates diverse biological functions such as cell growth, adhesion, survival and differentiation through the regulation of transcription, translation, cytoskeletal rearrangements. The MAPK/ERK cascade also plays a role in initiation and regulation of meiosis, mitosis, and postmitotic functions in differentiated cells by phosphorylating a number of transcription factors. About 160 substrates have already been discovered for ERKs. Many of these substrates are localized in the nucleus, and seem to participate in the regulation of transcription upon stimulation. However, other substrates are found in the cytosol as well as in other cellular organelles, and those are responsible for processes such as translation, mitosis and apoptosis. Moreover, the MAPK/ERK cascade is also involved in the regulation of the endosomal dynamics, including lysosome processing and endosome cycling through the perinuclear recycling compartment (PNRC); as well as in the fragmentation of the Golgi apparatus during mitosis. The substrates include transcription factors (such as ATF2, BCL6, ELK1, ERF, FOS, HSF4 or SPZ1), cytoskeletal elements (such as CANX, CTTN, GJA1, MAP2, MAPT, PXN, SORBS3 or STMN1), regulators of apoptosis (such as BAD, BTG2, CASP9, DAPK1, IER3, MCL1 or PPARG), regulators of translation (such as EIF4EBP1 and FXR1) and a variety of other signaling-related molecules (like ARHGEF2, DCC, FRS2 or GRB10). Protein kinases (such as RAF1, RPS6KA1/RSK1, RPS6KA3/RSK2, RPS6KA2/RSK3, RPS6KA6/RSK4, SYK, MKNK1/MNK1, MKNK2/MNK2, RPS6KA5/MSK1, RPS6KA4/MSK2, MAPKAPK3 or MAPKAPK5) and phosphatases (such as DUSP1, DUSP4, DUSP6 or DUSP16) are other substrates which enable the propagation the MAPK/ERK signal to additional cytosolic and nuclear targets, thereby extending the specificity of the cascade. Mediates phosphorylation of TPR in response to EGF stimulation. May play a role in the spindle assembly checkpoint. Phosphorylates PML and promotes its interaction with PIN1, leading to PML degradation. Phosphorylates CDK2AP2. Phosphorylates phosphoglycerate kinase PGK1 under hypoxic conditions to promote its targeting to the mitochondrion and suppress the formation of acetyl-coenzyme A from pyruvate. Its function is as follows. Acts as a transcriptional repressor. Binds to a [GC]AAA[GC] consensus sequence. Repress the expression of interferon gamma-induced genes. Seems to bind to the promoter of CCL5, DMP1, IFIH1, IFITM1, IRF7, IRF9, LAMP3, OAS1, OAS2, OAS3 and STAT1. Transcriptional activity is independent of kinase activity. The protein is Mitogen-activated protein kinase 1 of Mus musculus (Mouse).